Here is a 194-residue protein sequence, read N- to C-terminus: Putative manganese efflux pump MntP (194 aa).

The next 6 membrane-spanning stretches (helical) occupy residues 8-28, 36-56, 61-81, 109-129, 138-158, and 172-192; these read LLAI…GIIL, MLIM…LGWL, FSHL…AFLG, MAVA…FLGI, PAGI…IFGI, and LWGG…HLFF.

Belongs to the MntP (TC 9.B.29) family.

The protein resides in the cell inner membrane. Probably functions as a manganese efflux pump. In Bacteroides fragilis (strain ATCC 25285 / DSM 2151 / CCUG 4856 / JCM 11019 / LMG 10263 / NCTC 9343 / Onslow / VPI 2553 / EN-2), this protein is Putative manganese efflux pump MntP.